Here is a 298-residue protein sequence, read N- to C-terminus: tRNA pseudouridine synthase B (298 aa).

The active-site Nucleophile is the Asp-45.

The protein belongs to the pseudouridine synthase TruB family. Type 1 subfamily.

It catalyses the reaction uridine(55) in tRNA = pseudouridine(55) in tRNA. Responsible for synthesis of pseudouridine from uracil-55 in the psi GC loop of transfer RNAs. The sequence is that of tRNA pseudouridine synthase B from Thiobacillus denitrificans (strain ATCC 25259 / T1).